We begin with the raw amino-acid sequence, 209 residues long: MIGKLKGLVDSQGEDYVILDVNGVGYVVHCSSRTLQNLPPQGQATALAIDTQMREDSIKLYGFASETEREWFRLLQSVQGVGAKVALAIQGVLRPGEIVTAIAAQDRAAFARASGVGAKLAARILAELKDKAPALGASLHTLAGAGSEGAGVEAPASGAVSDAISVLVNLGFGRSQAAVAVAASSKALGSGAGAGDLAKRALQELAQSG.

Residues 1–64 form a domain I region; the sequence is MIGKLKGLVD…EDSIKLYGFA (64 aa). Positions 65 to 143 are domain II; sequence SETEREWFRL…ALGASLHTLA (79 aa). The tract at residues 144–154 is flexible linker; it reads GAGSEGAGVEA. The domain III stretch occupies residues 155 to 209; the sequence is PASGAVSDAISVLVNLGFGRSQAAVAVAASSKALGSGAGAGDLAKRALQELAQSG.

It belongs to the RuvA family. As to quaternary structure, homotetramer. Forms an RuvA(8)-RuvB(12)-Holliday junction (HJ) complex. HJ DNA is sandwiched between 2 RuvA tetramers; dsDNA enters through RuvA and exits via RuvB. An RuvB hexamer assembles on each DNA strand where it exits the tetramer. Each RuvB hexamer is contacted by two RuvA subunits (via domain III) on 2 adjacent RuvB subunits; this complex drives branch migration. In the full resolvosome a probable DNA-RuvA(4)-RuvB(12)-RuvC(2) complex forms which resolves the HJ.

It localises to the cytoplasm. The RuvA-RuvB-RuvC complex processes Holliday junction (HJ) DNA during genetic recombination and DNA repair, while the RuvA-RuvB complex plays an important role in the rescue of blocked DNA replication forks via replication fork reversal (RFR). RuvA specifically binds to HJ cruciform DNA, conferring on it an open structure. The RuvB hexamer acts as an ATP-dependent pump, pulling dsDNA into and through the RuvAB complex. HJ branch migration allows RuvC to scan DNA until it finds its consensus sequence, where it cleaves and resolves the cruciform DNA. In Methylocella silvestris (strain DSM 15510 / CIP 108128 / LMG 27833 / NCIMB 13906 / BL2), this protein is Holliday junction branch migration complex subunit RuvA.